We begin with the raw amino-acid sequence, 271 residues long: Interleukin-1 alpha (271 aa).

The propeptide occupies M1 to R112. K82 is subject to N6-acetyllysine. Positions K82–L86 are nuclear localization signal (NLS). Residue S87 is modified to Phosphoserine. Residues N102, N121, N137, and N141 are each glycosylated (N-linked (GlcNAc...) asparagine).

It belongs to the IL-1 family. Monomer. Interacts with TMED10; the interaction mediates the translocation from the cytoplasm into the ERGIC (endoplasmic reticulum-Golgi intermediate compartment) and thereby secretion. Interacts with IL1R1. Interacts with S100A13; this interaction is the first step in the export of IL1A, followed by direct translocation of this complex across the plasma membrane. In terms of processing, acetylated within its nuclear localization sequence, which impacts subcellular localization. Proteolytic processed by CAPN1 in a calcium-dependent manner. Cleavage from 31 kDa precursor to 18 kDa biologically active molecules. Post-translationally, phosphorylated. Phosphorylation greatly enhances susceptibility to digestion and promotes the conversion of pre-IL1A alpha to the biologically active IL1A.

The protein resides in the nucleus. Its subcellular location is the cytoplasm. It localises to the secreted. Functionally, cytokine constitutively present intracellularly in nearly all resting non-hematopoietic cells that plays an important role in inflammation and bridges the innate and adaptive immune systems. After binding to its receptor IL1R1 together with its accessory protein IL1RAP, forms the high affinity interleukin-1 receptor complex. Signaling involves the recruitment of adapter molecules such as MYD88, IRAK1 or IRAK4. In turn, mediates the activation of NF-kappa-B and the three MAPK pathways p38, p42/p44 and JNK pathways. Within the cell, acts as an alarmin and cell death results in its liberation in the extracellular space after disruption of the cell membrane to induce inflammation and alert the host to injury or damage. In addition to its role as a danger signal, which occurs when the cytokine is passively released by cell necrosis, directly senses DNA damage and acts as signal for genotoxic stress without loss of cell integrity. This is Interleukin-1 alpha (IL1A) from Macaca fascicularis (Crab-eating macaque).